A 155-amino-acid chain; its full sequence is Transcriptional repressor NrdR (155 aa).

Residues 3–34 (CPFCSHFESKVVDSRPTDEGQAIRRRRECVSC) fold into a zinc finger. One can recognise an ATP-cone domain in the interval 49–139 (LIVVKKSGNR…VYREFKDINT (91 aa)).

The protein belongs to the NrdR family. Zn(2+) is required as a cofactor.

Negatively regulates transcription of bacterial ribonucleotide reductase nrd genes and operons by binding to NrdR-boxes. The protein is Transcriptional repressor NrdR of Alkaliphilus metalliredigens (strain QYMF).